A 272-amino-acid polypeptide reads, in one-letter code: 3-keto-5-aminohexanoate cleavage enzyme (272 aa).

Glutamate 15 lines the (5S)-5-amino-3-oxohexanoate pocket. Zn(2+) contacts are provided by histidine 47 and histidine 49. Residues serine 83, glycine 86, and threonine 107 each coordinate (5S)-5-amino-3-oxohexanoate. Glutamate 226 is a Zn(2+) binding site.

This sequence belongs to the BKACE family. Kce subfamily. As to quaternary structure, homotetramer. It depends on Zn(2+) as a cofactor.

The enzyme catalyses (5S)-5-amino-3-oxohexanoate + acetyl-CoA = (3S)-3-aminobutanoyl-CoA + acetoacetate. It participates in amino-acid degradation; L-lysine degradation via acetate pathway. With respect to regulation, 3-fold increase in activity by addition of 10 mM 2-mercaptoethanol. Addition of CoCl(2) and to a lesser extent MnCl(2) increases the activity but not MgCl(2). Inhibited by phosphate buffer but not by 5,5'-dithio-2-nitrobenzoic acid. Functionally, involved in the anaerobic fermentation of lysine. Catalyzes the reversible reaction between 3-keto-5-aminohexanoate (KAH) and acetyl-CoA to form 3-aminobutyryl-CoA and acetoacetate. The reaction involves the deprotonation of KAH, the nucleophilic addition onto acetyl-CoA and the intramolecular transfer of the CoA moiety. It can also use beta-alanyl-CoA as substrate. In Fusobacterium nucleatum subsp. nucleatum (strain ATCC 25586 / DSM 15643 / BCRC 10681 / CIP 101130 / JCM 8532 / KCTC 2640 / LMG 13131 / VPI 4355), this protein is 3-keto-5-aminohexanoate cleavage enzyme.